Reading from the N-terminus, the 398-residue chain is Acetate kinase (398 aa).

Residue Asn7 coordinates Mg(2+). Lys14 serves as a coordination point for ATP. Arg85 is a substrate binding site. The active-site Proton donor/acceptor is Asp142. ATP-binding positions include 202 to 206, 277 to 279, and 325 to 329; these read HLGNG, DMR, and GIGEN. A Mg(2+)-binding site is contributed by Glu379.

This sequence belongs to the acetokinase family. In terms of assembly, homodimer. Requires Mg(2+) as cofactor. Mn(2+) is required as a cofactor.

It localises to the cytoplasm. The enzyme catalyses acetate + ATP = acetyl phosphate + ADP. The protein operates within metabolic intermediate biosynthesis; acetyl-CoA biosynthesis; acetyl-CoA from acetate: step 1/2. In terms of biological role, catalyzes the formation of acetyl phosphate from acetate and ATP. Can also catalyze the reverse reaction. The chain is Acetate kinase from Deinococcus radiodurans (strain ATCC 13939 / DSM 20539 / JCM 16871 / CCUG 27074 / LMG 4051 / NBRC 15346 / NCIMB 9279 / VKM B-1422 / R1).